Consider the following 159-residue polypeptide: NADH-quinone oxidoreductase subunit B (159 aa).

[4Fe-4S] cluster-binding residues include Cys32, Cys33, Cys97, and Cys126.

Belongs to the complex I 20 kDa subunit family. As to quaternary structure, NDH-1 is composed of 14 different subunits. Subunits NuoB, C, D, E, F, and G constitute the peripheral sector of the complex. Requires [4Fe-4S] cluster as cofactor.

The protein resides in the cell inner membrane. The enzyme catalyses a quinone + NADH + 5 H(+)(in) = a quinol + NAD(+) + 4 H(+)(out). NDH-1 shuttles electrons from NADH, via FMN and iron-sulfur (Fe-S) centers, to quinones in the respiratory chain. The immediate electron acceptor for the enzyme in this species is believed to be ubiquinone. Couples the redox reaction to proton translocation (for every two electrons transferred, four hydrogen ions are translocated across the cytoplasmic membrane), and thus conserves the redox energy in a proton gradient. This chain is NADH-quinone oxidoreductase subunit B, found in Helicobacter acinonychis (strain Sheeba).